We begin with the raw amino-acid sequence, 260 residues long: Uridylate kinase (260 aa).

29–32 (KLSG) contributes to the ATP binding site. Residues 37 to 42 (GDLGYG) form an involved in allosteric activation by GTP region. Glycine 71 lines the UMP pocket. 2 residues coordinate ATP: glycine 72 and arginine 76. UMP contacts are provided by residues aspartate 91 and 152-159 (SGNPFFTT). Threonine 179, tyrosine 185, and aspartate 188 together coordinate ATP.

It belongs to the UMP kinase family. In terms of assembly, homohexamer.

The protein localises to the cytoplasm. The enzyme catalyses UMP + ATP = UDP + ADP. Its pathway is pyrimidine metabolism; CTP biosynthesis via de novo pathway; UDP from UMP (UMPK route): step 1/1. With respect to regulation, allosterically activated by GTP. Inhibited by UTP. In terms of biological role, catalyzes the reversible phosphorylation of UMP to UDP. This Synechocystis sp. (strain ATCC 27184 / PCC 6803 / Kazusa) protein is Uridylate kinase.